A 185-amino-acid chain; its full sequence is Elongation factor P (185 aa).

This sequence belongs to the elongation factor P family.

It localises to the cytoplasm. It participates in protein biosynthesis; polypeptide chain elongation. Functionally, involved in peptide bond synthesis. Stimulates efficient translation and peptide-bond synthesis on native or reconstituted 70S ribosomes in vitro. Probably functions indirectly by altering the affinity of the ribosome for aminoacyl-tRNA, thus increasing their reactivity as acceptors for peptidyl transferase. This Streptococcus equi subsp. zooepidemicus (strain MGCS10565) protein is Elongation factor P.